The primary structure comprises 542 residues: CTP synthase (542 aa).

An amidoligase domain region spans residues 1–266 (MATNYIFVTG…DDLICQRFRL (266 aa)). Ser-14 lines the CTP pocket. Ser-14 serves as a coordination point for UTP. ATP is bound by residues 15-20 (SLGKGI) and Asp-72. Mg(2+) is bound by residues Asp-72 and Glu-140. Residues 147 to 149 (DIE), 187 to 192 (KTKPTQ), and Lys-223 each bind CTP. Residues 187–192 (KTKPTQ) and Lys-223 contribute to the UTP site. 239-241 (KDV) contacts ATP. The Glutamine amidotransferase type-1 domain maps to 291 to 542 (TIGMVGKYVE…VKAAKENQKK (252 aa)). Residue Gly-352 participates in L-glutamine binding. Catalysis depends on Cys-379, which acts as the Nucleophile; for glutamine hydrolysis. L-glutamine contacts are provided by residues 380-383 (LGMQ), Glu-403, and Arg-470. Residues His-515 and Glu-517 contribute to the active site.

This sequence belongs to the CTP synthase family. Homotetramer.

It carries out the reaction UTP + L-glutamine + ATP + H2O = CTP + L-glutamate + ADP + phosphate + 2 H(+). It catalyses the reaction L-glutamine + H2O = L-glutamate + NH4(+). The catalysed reaction is UTP + NH4(+) + ATP = CTP + ADP + phosphate + 2 H(+). It participates in pyrimidine metabolism; CTP biosynthesis via de novo pathway; CTP from UDP: step 2/2. With respect to regulation, allosterically activated by GTP, when glutamine is the substrate; GTP has no effect on the reaction when ammonia is the substrate. The allosteric effector GTP functions by stabilizing the protein conformation that binds the tetrahedral intermediate(s) formed during glutamine hydrolysis. Inhibited by the product CTP, via allosteric rather than competitive inhibition. Its function is as follows. Catalyzes the ATP-dependent amination of UTP to CTP with either L-glutamine or ammonia as the source of nitrogen. Regulates intracellular CTP levels through interactions with the four ribonucleotide triphosphates. The sequence is that of CTP synthase from Mannheimia succiniciproducens (strain KCTC 0769BP / MBEL55E).